Here is a 378-residue protein sequence, read N- to C-terminus: UPF0754 membrane protein Bcer98_0694 (378 aa).

Residues 358-378 (LGALLGGTIGLMQGILLLFLM) traverse the membrane as a helical segment.

It belongs to the UPF0754 family.

Its subcellular location is the cell membrane. The protein is UPF0754 membrane protein Bcer98_0694 of Bacillus cytotoxicus (strain DSM 22905 / CIP 110041 / 391-98 / NVH 391-98).